Consider the following 468-residue polypeptide: Cysteine--tRNA ligase (468 aa).

Cys-27 is a Zn(2+) binding site. Positions 29–39 (PTVYDDAHLGH) match the 'HIGH' region motif. Cys-204, His-234, and Glu-238 together coordinate Zn(2+). The 'KMSKS' region motif lies at 266 to 270 (KMSKS). Position 269 (Lys-269) interacts with ATP.

This sequence belongs to the class-I aminoacyl-tRNA synthetase family. Monomer. The cofactor is Zn(2+).

The protein localises to the cytoplasm. The enzyme catalyses tRNA(Cys) + L-cysteine + ATP = L-cysteinyl-tRNA(Cys) + AMP + diphosphate. In Campylobacter hominis (strain ATCC BAA-381 / DSM 21671 / CCUG 45161 / LMG 19568 / NCTC 13146 / CH001A), this protein is Cysteine--tRNA ligase.